The following is a 695-amino-acid chain: uncharacterized protein (695 aa).

This is an uncharacterized protein from Xanthomonas campestris pv. campestris (strain B100).